The primary structure comprises 50 residues: Protein PndA (50 aa).

A helical membrane pass occupies residues 5–25 (TFLMMLIVICVTILCFVWMVR).

The protein belongs to the Hok/Gef family.

It is found in the cell inner membrane. Toxic component of a type I toxin-antitoxin (TA) system. When expressed is involved in cellular Mg(2+) release and degradation of stable RNA. This Escherichia coli protein is Protein PndA (pndA).